We begin with the raw amino-acid sequence, 87 residues long: Small ribosomal subunit protein bS20 (87 aa).

The segment at 1-25 is disordered; that stretch reads MANTAQARKRARQSVQRNKHNSSLR. The segment covering 7–22 has biased composition (basic residues); that stretch reads ARKRARQSVQRNKHNS.

The protein belongs to the bacterial ribosomal protein bS20 family.

In terms of biological role, binds directly to 16S ribosomal RNA. The protein is Small ribosomal subunit protein bS20 of Bordetella bronchiseptica (strain ATCC BAA-588 / NCTC 13252 / RB50) (Alcaligenes bronchisepticus).